Reading from the N-terminus, the 270-residue chain is tRNA pseudouridine synthase A (270 aa).

The active-site Nucleophile is Asp51. Substrate is bound at residue Tyr109.

It belongs to the tRNA pseudouridine synthase TruA family. Homodimer.

The catalysed reaction is uridine(38/39/40) in tRNA = pseudouridine(38/39/40) in tRNA. Formation of pseudouridine at positions 38, 39 and 40 in the anticodon stem and loop of transfer RNAs. This is tRNA pseudouridine synthase A from Burkholderia mallei (strain ATCC 23344).